The sequence spans 113 residues: MAAIPSSGSLVATHDYYRRRLGSTSSNSSCGSVDYSGEVIPHHPGLPKSDPGHWWASFFFGKPTHPVMTTVSESPENSGSFRITSGLVPCGLVQESVLKQKVGDTKSDSSPSA.

It belongs to the PPDPF family.

Functionally, probable regulator of exocrine pancreas development. This Xenopus laevis (African clawed frog) protein is Pancreatic progenitor cell differentiation and proliferation factor B (ppdpf-b).